The sequence spans 323 residues: Forkhead transcription factor fkh-6 (323 aa).

The segment at residues 21-122 (KPPYSYVALI…DNGNFKRRRV (102 aa)) is a DNA-binding region (fork-head).

It is found in the nucleus. Its function is as follows. Probable transcription factor. Binds to the DNA sequence motif 5'-[TA]TGTT[TG]T[TG][ATG]TT-3'. Regulates sexual dimorphism in the gonad, promoting male gonadal cell fates in chromosomally (XO) male animals, yet plays a role in gonadogenesis in both sexes; probably acts downstream of terminal regulator of sex determination tra-1, to control early gonadogenesis. Positively modulates expression of homeobox protein egl-5, probably acting indirectly, during early gonadal development. The chain is Forkhead transcription factor fkh-6 from Caenorhabditis elegans.